The following is an 878-amino-acid chain: Leucine--tRNA ligase (878 aa).

The short motif at Pro56–His66 is the 'HIGH' region element. Positions Lys630–Ser634 match the 'KMSKS' region motif. ATP is bound at residue Lys633.

The protein belongs to the class-I aminoacyl-tRNA synthetase family.

Its subcellular location is the cytoplasm. The catalysed reaction is tRNA(Leu) + L-leucine + ATP = L-leucyl-tRNA(Leu) + AMP + diphosphate. In Prochlorococcus marinus (strain MIT 9303), this protein is Leucine--tRNA ligase.